A 227-amino-acid polypeptide reads, in one-letter code: Esterase OVCA2 (227 aa).

Residues serine 120, aspartate 180, and histidine 207 each act as charge relay system in the active site.

This sequence belongs to the LovG family.

It catalyses the reaction a carboxylic ester + H2O = an alcohol + a carboxylate + H(+). Its function is as follows. Exhibits ester hydrolase activity with a strong preference for long-chain alkyl ester substrates and high selectivity against a variety of short, branched, and substituted esters. Is able to hydrolyze ester bonds within a wide range of p-nitrophenyl derivatives (C2-C14) in vitro, with a strong preference toward substrates of &gt;8 carbons. The chain is Esterase OVCA2 (ovca2) from Danio rerio (Zebrafish).